A 339-amino-acid polypeptide reads, in one-letter code: Putative ABC transporter ATP-binding protein MG467 homolog (339 aa).

Residues lysine 41–leucine 87 are disordered. Basic residues predominate over residues lysine 42–lysine 53. A compositionally biased stretch (basic and acidic residues) spans valine 54–lysine 68. Positions lysine 74–lysine 83 are enriched in basic residues. In terms of domain architecture, ABC transporter spans isoleucine 112–leucine 338. Residue glycine 150–threonine 157 coordinates ATP.

The protein belongs to the ABC transporter superfamily.

In Mycoplasma pneumoniae (strain ATCC 29342 / M129 / Subtype 1) (Mycoplasmoides pneumoniae), this protein is Putative ABC transporter ATP-binding protein MG467 homolog.